Reading from the N-terminus, the 275-residue chain is 2,3,4,5-tetrahydropyridine-2,6-dicarboxylate N-succinyltransferase (275 aa).

Substrate-binding residues include Arg106 and Asp143.

The protein belongs to the transferase hexapeptide repeat family. As to quaternary structure, homotrimer.

The protein localises to the cytoplasm. It carries out the reaction (S)-2,3,4,5-tetrahydrodipicolinate + succinyl-CoA + H2O = (S)-2-succinylamino-6-oxoheptanedioate + CoA. Its pathway is amino-acid biosynthesis; L-lysine biosynthesis via DAP pathway; LL-2,6-diaminopimelate from (S)-tetrahydrodipicolinate (succinylase route): step 1/3. The polypeptide is 2,3,4,5-tetrahydropyridine-2,6-dicarboxylate N-succinyltransferase (Paraburkholderia xenovorans (strain LB400)).